The sequence spans 411 residues: Argininosuccinate synthase (411 aa).

ATP is bound by residues 11 to 19 (AYSGGLDTS) and Ala-37. Residues Tyr-88 and Ser-93 each contribute to the L-citrulline site. 116–124 (SHGATGKGN) contributes to the ATP binding site. L-aspartate-binding residues include Thr-120, Asn-124, and Asp-125. Position 124 (Asn-124) interacts with L-citrulline. L-citrulline contacts are provided by Arg-128, Ser-181, Ser-190, Glu-271, and Tyr-283.

This sequence belongs to the argininosuccinate synthase family. In terms of assembly, homotetramer.

It localises to the cytoplasm. The protein resides in the cytosol. It carries out the reaction L-citrulline + L-aspartate + ATP = 2-(N(omega)-L-arginino)succinate + AMP + diphosphate + H(+). The protein operates within amino-acid biosynthesis; L-arginine biosynthesis; L-arginine from L-ornithine and carbamoyl phosphate: step 2/3. It participates in nitrogen metabolism; urea cycle; (N(omega)-L-arginino)succinate from L-aspartate and L-citrulline: step 1/1. One of the enzymes of the urea cycle, the metabolic pathway transforming neurotoxic amonia produced by protein catabolism into inocuous urea in the liver of ureotelic animals. Catalyzes the formation of arginosuccinate from aspartate, citrulline and ATP and together with ASL it is responsible for the biosynthesis of arginine in most body tissues. This is Argininosuccinate synthase from Xenopus laevis (African clawed frog).